Reading from the N-terminus, the 1451-residue chain is Fanconi anemia group D2 protein (1451 aa).

The disordered stretch occupies residues 1 to 37; sequence MVSKRRLSKSEDKESLTEDASKTRKQPLSKKTKKSHI. An interaction with FANCE region spans residues 1-291; that stretch reads MVSKRRLSKS…IKFILHSVTA (291 aa). Phosphoserine is present on S8. Basic and acidic residues predominate over residues 8–22; the sequence is SKSEDKESLTEDASK. Residues 23–36 show a composition bias toward basic residues; that stretch reads TRKQPLSKKTKKSH. S222 bears the Phosphoserine; by ATM mark. Positions 248–359 are interaction with BRCA2; it reads VLSSLRLDPN…IKSAIRYEKT (112 aa). K561 is covalently cross-linked (Glycyl lysine isopeptide (Lys-Gly) (interchain with G-Cter in ubiquitin)). Phosphoserine is present on residues S592, S594, and S717. The segment at 868-906 is disordered; sequence IERKQKTDGSKTSSSDTLSEEKNSECDPTPSHRGQLNKE. The residue at position 1257 (S1257) is a Phosphoserine. Positions 1396 to 1451 are disordered; sequence GEEIKSQNSQESTADESEDDMSSQASKSKATEDGEEDEVSAGEKEQDSDESYDDSD. Phosphoserine; by ATM occurs at positions 1401 and 1404. 2 positions are modified to phosphoserine: S1412 and S1423. At T1426 the chain carries Phosphothreonine. Over residues 1428-1451 the composition is skewed to acidic residues; that stretch reads DGEEDEVSAGEKEQDSDESYDDSD. S1435 is modified (phosphoserine).

Belongs to the Fanconi anemia protein FANCD2 family. In terms of assembly, homodimer; cannot be ubiquitinated and does not bind DNA. Part of a FANCI-FANCD2 heterodimeric complex that binds and scans dsDNA for DNA damage. Interacts directly with FANCE and FANCI. Interacts with USP1 and MEN1. The ubiquitinated form specifically interacts with BRCA1 and BLM. Both the nonubiquitinated and the monoubiquitinated forms interact with BRCA2; this interaction is mediated by phosphorylated FANCG and the complex also includes XCCR3. The ubiquitinated form specifically interacts with MTMR15/FAN1 (via UBZ-type zinc finger), leading to recruit MTMR15/FAN1 to sites of DNA damage. Interacts with DCLRE1B/Apollo. Interacts with POLN. Interacts with UHRF1 and UHRF2; these interactions promote FANCD2 activation. Monoubiquitinated on Lys-561 during S phase and upon genotoxic stress by FANCL in complex with E2 ligases UBE2T or UBE2W (isoform 1 and isoform 2). Deubiquitinated by USP1 as cells enter G2/M, or once DNA repair is completed. Monoubiquitination requires the joint intervention of the FANC core complex, including FANCA, FANCB, FANCC, FANCE, FANCF, FANCG, and FANCM, and proteins involved in cell cycle checkpoints and DNA repair, including RPA1, ATR, CHEK1 and BRCA1, and is mediated by FANCL/PHF9. Monoubiquitination prevents DNA release from the FANCI-FANCD2 complex. FANCD2 is only ubiquitinated in the FANCI-FANCD2 complex and the monoubiquitination of FANCD2 is promoted by phosphorylation of FANCI. Ubiquitination is required for binding to chromatin, interaction with BRCA1, BRCA2 and MTMR15/FAN1, DNA repair, and normal cell cycle progression, but not for phosphorylation on Ser-222 or interaction with MEN1. In terms of processing, phosphorylated in response to various genotoxic stresses by ATM and/or ATR. Upon ionizing radiation, phosphorylated by ATM on Ser-222 and Ser-1404. Phosphorylation on Ser-222 is required for S-phase checkpoint activation, but not for ubiquitination, foci formation, or DNA repair. In contrast, phosphorylation by ATR on other sites may be required for ubiquitination and foci formation. In terms of tissue distribution, highly expressed in germinal center cells of the spleen, tonsil, and reactive lymph nodes, and in the proliferating basal layer of squamous epithelium of tonsil, esophagus, oropharynx, larynx and cervix. Expressed in cytotrophoblastic cells of the placenta and exocrine cells of the pancreas (at protein level). Highly expressed in testis, where expression is restricted to maturing spermatocytes.

The protein localises to the nucleus. In terms of biological role, required for maintenance of chromosomal stability. Promotes accurate and efficient pairing of homologs during meiosis. Involved in the repair of DNA double-strand breaks, both by homologous recombination and single-strand annealing. The FANCI-FANCD2 complex binds and scans double-stranded DNA (dsDNA) for DNA damage; this complex stalls at DNA junctions between double-stranded DNA and single-stranded DNA. May participate in S phase and G2 phase checkpoint activation upon DNA damage. Plays a role in preventing breakage and loss of missegregating chromatin at the end of cell division, particularly after replication stress. Required for the targeting, or stabilization, of BLM to non-centromeric abnormal structures induced by replicative stress. Promotes BRCA2/FANCD1 loading onto damaged chromatin. May also be involved in B-cell immunoglobulin isotype switching. In Homo sapiens (Human), this protein is Fanconi anemia group D2 protein (FANCD2).